The sequence spans 630 residues: MGACNITVLLLVIMLWLPHGLSMGNSCSASVLEARRFFELENEQLRRRFHEEFLSGYNYNTNVTEANRQAMIEVYARNAELNKRLAQQIKSSDYVQSEDADIRRQAEHLSKLGASALNADDYLALQNAISSMQTNYATATVCSYTNRSDCSLTLEPHIQERLSHSRDPAELAWYWREWHDKSGTPMRQNFAEYVRLTRKASQLNGHRSYADYWVQFYEDPDFERQLDATFKQLLPFYRQLHGYVRFRLRQHYGPDVMPAEGNIPISLLGNMWGQSWNELLDLFTPYPEKPFVDVKAEMEKQGYTVQKLFELGDQFFQSLGMRALPPSFWNLSVLTRPDDRHVVCHASAWDFYQDSDVRIKMCTEVDSHYFYVVHHELGHIQYYLQYEQQPAVYRGAPNPGFHEAVGDVIALSVMSAKHLKAIGLIENGRLDEKSRINQLFKQALSKIVFLPFGYAVDKYRYAVFRNELDESQWNCGFWQMRSEFGGVEPPVFRTEKDFDPPAKYHIDADVEYLRYFAAHIFQFQFHKALCRKAGQYAPNNSRLTLDNCDIFGSKAAGRSLSQFLSKGNSRHWKEVLEEFTGETEMDPAALLEYFEPLYQWLKQENSRLGVPLGWGPTDKIPSDCCGTFST.

The first 22 residues, 1–22, serve as a signal peptide directing secretion; that stretch reads MGACNITVLLLVIMLWLPHGLS. A Peptidase M2 domain is found at 28–615; that stretch reads SASVLEARRF…SRLGVPLGWG (588 aa). Cystine bridges form between Cys-142–Cys-150 and Cys-344–Cys-362. Residue His-375 participates in Zn(2+) binding. The active-site Proton acceptor is the Glu-376. The Zn(2+) site is built by His-379 and Glu-403. His-505 acts as the Proton donor in catalysis. An intrachain disulfide couples Cys-530 to Cys-548.

The protein belongs to the peptidase M2 family. Zn(2+) is required as a cofactor. Glycosylated.

It localises to the secreted. It is found in the extracellular space. The enzyme catalyses Release of a C-terminal dipeptide, oligopeptide-|-Xaa-Yaa, when Xaa is not Pro, and Yaa is neither Asp nor Glu. Thus, conversion of angiotensin I to angiotensin II, with increase in vasoconstrictor activity, but no action on angiotensin II.. Its activity is regulated as follows. Inhibited by captopril, lisinopril, trandolaprilat, fosinoprilat and enalaprilat. In terms of biological role, may be involved in the specific maturation or degradation of a number of bioactive peptides. May have a role in the specification of heart progenitors. The sequence is that of Angiotensin-converting enzyme-related protein (Acer) from Drosophila melanogaster (Fruit fly).